Here is a 416-residue protein sequence, read N- to C-terminus: Putative competence-damage inducible protein (416 aa).

This sequence belongs to the CinA family.

The chain is Putative competence-damage inducible protein from Bacillus velezensis (strain DSM 23117 / BGSC 10A6 / LMG 26770 / FZB42) (Bacillus amyloliquefaciens subsp. plantarum).